We begin with the raw amino-acid sequence, 131 residues long: Large ribosomal subunit protein bL12c (131 aa).

Residues 107–131 (QGVSKDDAEASKKQLEDAGAKVKIS) are disordered. Residues 110–131 (SKDDAEASKKQLEDAGAKVKIS) show a composition bias toward basic and acidic residues.

The protein belongs to the bacterial ribosomal protein bL12 family. As to quaternary structure, homodimer. Part of the ribosomal stalk of the 50S ribosomal subunit. Forms a multimeric L10(L12)X complex, where L10 forms an elongated spine to which 2 to 4 L12 dimers bind in a sequential fashion. Binds GTP-bound translation factors.

Its subcellular location is the plastid. The protein localises to the chloroplast. Functionally, forms part of the ribosomal stalk which helps the ribosome interact with GTP-bound translation factors. Is thus essential for accurate translation. The protein is Large ribosomal subunit protein bL12c of Chlorella vulgaris (Green alga).